A 277-amino-acid chain; its full sequence is Acetyl-coenzyme A carboxylase carboxyl transferase subunit beta (277 aa).

Residues 22-277 enclose the CoA carboxyltransferase N-terminal domain; sequence LWTKCPGCNR…TLKQLLYFLT (256 aa). Zn(2+) contacts are provided by cysteine 26, cysteine 29, cysteine 45, and cysteine 48. Residues 26–48 form a C4-type zinc finger; sequence CPGCNRFLYTKELELNQSVCHYC.

This sequence belongs to the AccD/PCCB family. As to quaternary structure, acetyl-CoA carboxylase is a heterohexamer composed of biotin carboxyl carrier protein (AccB), biotin carboxylase (AccC) and two subunits each of ACCase subunit alpha (AccA) and ACCase subunit beta (AccD). The cofactor is Zn(2+).

The protein localises to the cytoplasm. It carries out the reaction N(6)-carboxybiotinyl-L-lysyl-[protein] + acetyl-CoA = N(6)-biotinyl-L-lysyl-[protein] + malonyl-CoA. It functions in the pathway lipid metabolism; malonyl-CoA biosynthesis; malonyl-CoA from acetyl-CoA: step 1/1. Component of the acetyl coenzyme A carboxylase (ACC) complex. Biotin carboxylase (BC) catalyzes the carboxylation of biotin on its carrier protein (BCCP) and then the CO(2) group is transferred by the transcarboxylase to acetyl-CoA to form malonyl-CoA. This is Acetyl-coenzyme A carboxylase carboxyl transferase subunit beta from Methylacidiphilum infernorum (isolate V4) (Methylokorus infernorum (strain V4)).